A 141-amino-acid polypeptide reads, in one-letter code: Large ribosomal subunit protein uL23B (141 aa).

The interval 1–22 (MSVGKAKGAQKTVQKGIHNKVA) is disordered.

This sequence belongs to the universal ribosomal protein uL23 family. In terms of assembly, component of the large ribosomal subunit (LSU). Mature yeast ribosomes consist of a small (40S) and a large (60S) subunit. The 40S small subunit contains 1 molecule of ribosomal RNA (18S rRNA) and at least 33 different proteins. The large 60S subunit contains 3 rRNA molecules (25S, 5.8S and 5S rRNA) and at least 46 different proteins. uL23 is associated with the polypeptide exit tunnel.

The protein resides in the cytoplasm. This protein binds to a specific region on the 26S rRNA. Its function is as follows. Component of the ribosome, a large ribonucleoprotein complex responsible for the synthesis of proteins in the cell. The small ribosomal subunit (SSU) binds messenger RNAs (mRNAs) and translates the encoded message by selecting cognate aminoacyl-transfer RNA (tRNA) molecules. The large subunit (LSU) contains the ribosomal catalytic site termed the peptidyl transferase center (PTC), which catalyzes the formation of peptide bonds, thereby polymerizing the amino acids delivered by tRNAs into a polypeptide chain. The nascent polypeptides leave the ribosome through a tunnel in the LSU and interact with protein factors that function in enzymatic processing, targeting, and the membrane insertion of nascent chains at the exit of the ribosomal tunnel. uL23 is a major component of the universal docking site for these factors at the polypeptide exit tunnel. The chain is Large ribosomal subunit protein uL23B (rpl2502) from Schizosaccharomyces pombe (strain 972 / ATCC 24843) (Fission yeast).